A 342-amino-acid chain; its full sequence is Biotin synthase (342 aa).

One can recognise a Radical SAM core domain in the interval 38–262; sequence GQVQISTLLS…MMPTSYVRLS (225 aa). [4Fe-4S] cluster contacts are provided by cysteine 53, cysteine 57, and cysteine 60. Residues cysteine 97, cysteine 128, cysteine 188, and arginine 260 each contribute to the [2Fe-2S] cluster site.

It belongs to the radical SAM superfamily. Biotin synthase family. As to quaternary structure, homodimer. The cofactor is [4Fe-4S] cluster. It depends on [2Fe-2S] cluster as a cofactor.

It catalyses the reaction (4R,5S)-dethiobiotin + (sulfur carrier)-SH + 2 reduced [2Fe-2S]-[ferredoxin] + 2 S-adenosyl-L-methionine = (sulfur carrier)-H + biotin + 2 5'-deoxyadenosine + 2 L-methionine + 2 oxidized [2Fe-2S]-[ferredoxin]. It functions in the pathway cofactor biosynthesis; biotin biosynthesis; biotin from 7,8-diaminononanoate: step 2/2. Functionally, catalyzes the conversion of dethiobiotin (DTB) to biotin by the insertion of a sulfur atom into dethiobiotin via a radical-based mechanism. This is Biotin synthase from Baumannia cicadellinicola subsp. Homalodisca coagulata.